A 495-amino-acid chain; its full sequence is Nitrogen fixation regulatory protein (495 aa).

The PAS 1 domain occupies 23–93 (HPGLFFTMVE…QEMWQTLLQR (71 aa)). In terms of domain architecture, PAC spans 94 to 148 (QPWRGQLINQRRDGGLYLVDIDITPVLNPQGELEHYLAMQRDISVSYTLEQRLRN). The PAS 2; truncated domain maps to 151–174 (TLMEAVLNNIPAAVVVVDEQDRVV).

Required for the inhibition of NifA activity in response to oxygen and low level of fixed nitrogen. The protein is Nitrogen fixation regulatory protein (nifL) of Klebsiella oxytoca.